Consider the following 266-residue polypeptide: Enterotoxin type C-3 (266 aa).

A signal peptide spans 1–27; sequence MYKRLFISRVILIFALILVISTPNVLA. Positions 36 and 110 each coordinate Zn(2+). A disulfide bond links Cys-120 and Cys-137. His-145 and His-149 together coordinate Zn(2+).

The protein belongs to the staphylococcal/streptococcal toxin family. As to quaternary structure, interacts with MHC class II molecules composed of alpha/HLA-DRA and beta/HLA-DRB1 chains. Interacts with host T-cell receptor/TCR beta variable chain TRBV8-2.

It localises to the secreted. In terms of biological role, staphylococcal enterotoxin that activates the host immune system by binding as unprocessed molecules to major histocompatibility (MHC) complex class II and T-cell receptor (TCR) molecules. In turn, this ternary complex activates a large number of T-lymphocytes initiating a systemic release of pro-inflammatory cytokines. Also causes the intoxication staphylococcal food poisoning syndrome. The chain is Enterotoxin type C-3 (entC3) from Staphylococcus aureus.